A 509-amino-acid chain; its full sequence is MVLWILWRPFGFSRRLLKLERHSITESKSLIPLAWTSLTQTLSESPGIFLLGQRKRFSTMPEIETHEGDSELFSPPSDVRGMTKLDRTAFKKTVNIPVLKVRKEIVSRLMRSLRRAALQRPGIKRVIEDPEDKESRLILLDPYKIFTHDSFEKAGLSVLEQLNVSPQISKYNLELTYENFKSEEILRAVLPEGQDVTSGFSRVGHIAHLNLRDHQLPFKQLIGQVMIDKNPGITSAVNKINNIDNMYRNFHMEVLSGEQNMMTKVRENKYTYEFDFSKVYWNPRLSTEHSRITELLKAGDVLFDVFAGVGPFAIPVAKKNCTVFANDLNPESHKWLLHNCKLNKVDQKVKIFNLDGKDFLQGPVKEELIQLLSLSKERKPSVHIVMNLPAKAIEFLSAFKWLLDGQPCSNEFLPIVHCYSFSKDANPAKDVRQRAGAVLGISLEACSSVHLVRNVAPNKEMLCITFQIPAAVLYKNQTKNPENHEDPPLKRQRTAEAFSDEKTQIASNT.

A mitochondrion-targeting transit peptide spans 1 to 57 (MVLWILWRPFGFSRRLLKLERHSITESKSLIPLAWTSLTQTLSESPGIFLLGQRKRF). Residues His289, 327-328 (DL), 355-356 (DG), and Asn387 each bind S-adenosyl-L-methionine. The disordered stretch occupies residues 478–509 (TKNPENHEDPPLKRQRTAEAFSDEKTQIASNT).

The protein belongs to the class I-like SAM-binding methyltransferase superfamily. TRM5/TYW2 family. In terms of assembly, monomer.

Its subcellular location is the mitochondrion matrix. The protein localises to the nucleus. The protein resides in the cytoplasm. The enzyme catalyses guanosine(37) in tRNA + S-adenosyl-L-methionine = N(1)-methylguanosine(37) in tRNA + S-adenosyl-L-homocysteine + H(+). Involved in mitochondrial tRNA methylation. Specifically methylates the N1 position of guanosine-37 in various tRNAs. Methylation is not dependent on the nature of the nucleoside 5' of the target nucleoside. This is the first step in the biosynthesis of wybutosine (yW), a modified base adjacent to the anticodon of tRNAs and required for accurate decoding. The polypeptide is tRNA (guanine(37)-N(1))-methyltransferase (Macaca fascicularis (Crab-eating macaque)).